Reading from the N-terminus, the 297-residue chain is Phosphatidylserine decarboxylase proenzyme (297 aa).

Catalysis depends on charge relay system; for autoendoproteolytic cleavage activity residues D100, H157, and S263. Catalysis depends on S263, which acts as the Schiff-base intermediate with substrate; via pyruvic acid; for decarboxylase activity. A Pyruvic acid (Ser); by autocatalysis modification is found at S263.

This sequence belongs to the phosphatidylserine decarboxylase family. PSD-B subfamily. Prokaryotic type I sub-subfamily. In terms of assembly, heterodimer of a large membrane-associated beta subunit and a small pyruvoyl-containing alpha subunit. Requires pyruvate as cofactor. Post-translationally, is synthesized initially as an inactive proenzyme. Formation of the active enzyme involves a self-maturation process in which the active site pyruvoyl group is generated from an internal serine residue via an autocatalytic post-translational modification. Two non-identical subunits are generated from the proenzyme in this reaction, and the pyruvate is formed at the N-terminus of the alpha chain, which is derived from the carboxyl end of the proenzyme. The autoendoproteolytic cleavage occurs by a canonical serine protease mechanism, in which the side chain hydroxyl group of the serine supplies its oxygen atom to form the C-terminus of the beta chain, while the remainder of the serine residue undergoes an oxidative deamination to produce ammonia and the pyruvoyl prosthetic group on the alpha chain. During this reaction, the Ser that is part of the protease active site of the proenzyme becomes the pyruvoyl prosthetic group, which constitutes an essential element of the active site of the mature decarboxylase.

The protein localises to the cell membrane. It catalyses the reaction a 1,2-diacyl-sn-glycero-3-phospho-L-serine + H(+) = a 1,2-diacyl-sn-glycero-3-phosphoethanolamine + CO2. It participates in phospholipid metabolism; phosphatidylethanolamine biosynthesis; phosphatidylethanolamine from CDP-diacylglycerol: step 2/2. Its function is as follows. Catalyzes the formation of phosphatidylethanolamine (PtdEtn) from phosphatidylserine (PtdSer). This Haemophilus ducreyi (strain 35000HP / ATCC 700724) protein is Phosphatidylserine decarboxylase proenzyme.